Here is a 327-residue protein sequence, read N- to C-terminus: Methionyl-tRNA formyltransferase (327 aa).

(6S)-5,6,7,8-tetrahydrofolate is bound at residue 121-124 (SLLP).

It belongs to the Fmt family.

The enzyme catalyses L-methionyl-tRNA(fMet) + (6R)-10-formyltetrahydrofolate = N-formyl-L-methionyl-tRNA(fMet) + (6S)-5,6,7,8-tetrahydrofolate + H(+). Attaches a formyl group to the free amino group of methionyl-tRNA(fMet). The formyl group appears to play a dual role in the initiator identity of N-formylmethionyl-tRNA by promoting its recognition by IF2 and preventing the misappropriation of this tRNA by the elongation apparatus. The protein is Methionyl-tRNA formyltransferase of Burkholderia pseudomallei (strain 1106a).